Consider the following 398-residue polypeptide: Acetate kinase (398 aa).

Residue asparagine 10 participates in Mg(2+) binding. Lysine 17 serves as a coordination point for ATP. Substrate is bound at residue arginine 89. Aspartate 148 acts as the Proton donor/acceptor in catalysis. ATP-binding positions include 208-212 (HLGNG), 283-285 (DCR), and 331-335 (GIGEN). Residue glutamate 385 participates in Mg(2+) binding.

Belongs to the acetokinase family. As to quaternary structure, homodimer. Requires Mg(2+) as cofactor. Mn(2+) serves as cofactor.

It localises to the cytoplasm. It carries out the reaction acetate + ATP = acetyl phosphate + ADP. It functions in the pathway metabolic intermediate biosynthesis; acetyl-CoA biosynthesis; acetyl-CoA from acetate: step 1/2. Functionally, catalyzes the formation of acetyl phosphate from acetate and ATP. Can also catalyze the reverse reaction. This is Acetate kinase from Histophilus somni (strain 129Pt) (Haemophilus somnus).